The chain runs to 856 residues: Leucine--tRNA ligase (856 aa).

The 'HIGH' region signature appears at 42-52; the sequence is PYPSGNLHMGH. The 'KMSKS' region signature appears at 617 to 621; sequence KMSKS. Lysine 620 contributes to the ATP binding site.

Belongs to the class-I aminoacyl-tRNA synthetase family.

It is found in the cytoplasm. It catalyses the reaction tRNA(Leu) + L-leucine + ATP = L-leucyl-tRNA(Leu) + AMP + diphosphate. This is Leucine--tRNA ligase from Rippkaea orientalis (strain PCC 8801 / RF-1) (Cyanothece sp. (strain PCC 8801)).